The sequence spans 328 residues: Neuropeptides B/W receptor type 1 (328 aa).

Residues 1–37 (MDNASFSEPWPANASGPDPALSCSNASTLAPLPAPLA) lie on the Extracellular side of the membrane. N-linked (GlcNAc...) asparagine glycans are attached at residues Asn-3, Asn-13, and Asn-25. The chain crosses the membrane as a helical span at residues 38–61 (VAVPVVYAVICAVGLAGNSAVLYV). Residues 62–72 (LLRAPRMKTVT) lie on the Cytoplasmic side of the membrane. The chain crosses the membrane as a helical span at residues 73-97 (NLFILNLAIADELFTLVLPINIADF). Residues 98-112 (LLRQWPFGELMCKLI) lie on the Extracellular side of the membrane. Cys-109 and Cys-188 form a disulfide bridge. A helical membrane pass occupies residues 113-132 (VAIDQYNTFSSLYFLTVMSA). At 133–157 (DRYLVVLATAESRRVAGRTYSAARA) the chain is on the cytoplasmic side. A helical membrane pass occupies residues 158–177 (VSLAVWGIVTLVVLPFAVFA). The Extracellular segment spans residues 178–202 (RLDDEQGRRQCVLVFPQPEAFWWRA). Residues 203 to 224 (SRLYTLVLGFAIPVSTICVLYT) form a helical membrane-spanning segment. The Cytoplasmic segment spans residues 225–248 (TLLCRLHAMRLDSHAKALERAKKR). Residues 249–273 (VTFLVVAILAVCLLCWTPYHLSTVV) traverse the membrane as a helical segment. The Extracellular segment spans residues 274–283 (ALTTDLPQTP). The chain crosses the membrane as a helical span at residues 284 to 298 (LVIAISYFITSLSYA). The Cytoplasmic portion of the chain corresponds to 299 to 328 (NSCLNPFLYAFLDASFRRNLRQLITCRAAA).

The protein belongs to the G-protein coupled receptor 1 family. Found in cerebellum and frontal cortex. Detected at high levels in hippocampus, amygdala and trachea; at moderate levels in fetal brain, pituitary gland and prostate. Not in caudate, accumbens, kidney or liver. Also detected at high levels in lung carcinoma.

It localises to the cell membrane. Its function is as follows. Interacts specifically with a number of opioid ligands. Receptor for neuropeptides B and W, which may be involved in neuroendocrine system regulation, food intake and the organization of other signals. Has a higher affinity for neuropeptide B. The sequence is that of Neuropeptides B/W receptor type 1 (NPBWR1) from Homo sapiens (Human).